A 615-amino-acid chain; its full sequence is Dihydroxy-acid dehydratase (615 aa).

A Mg(2+)-binding site is contributed by Asp81. Cys122 is a [2Fe-2S] cluster binding site. Positions 123 and 124 each coordinate Mg(2+). Residue Lys124 is modified to N6-carboxylysine. Cys197 contributes to the [2Fe-2S] cluster binding site. Glu494 contributes to the Mg(2+) binding site. Ser520 (proton acceptor) is an active-site residue.

The protein belongs to the IlvD/Edd family. In terms of assembly, homodimer. It depends on [2Fe-2S] cluster as a cofactor. Requires Mg(2+) as cofactor.

It catalyses the reaction (2R)-2,3-dihydroxy-3-methylbutanoate = 3-methyl-2-oxobutanoate + H2O. It carries out the reaction (2R,3R)-2,3-dihydroxy-3-methylpentanoate = (S)-3-methyl-2-oxopentanoate + H2O. The protein operates within amino-acid biosynthesis; L-isoleucine biosynthesis; L-isoleucine from 2-oxobutanoate: step 3/4. Its pathway is amino-acid biosynthesis; L-valine biosynthesis; L-valine from pyruvate: step 3/4. Functions in the biosynthesis of branched-chain amino acids. Catalyzes the dehydration of (2R,3R)-2,3-dihydroxy-3-methylpentanoate (2,3-dihydroxy-3-methylvalerate) into 2-oxo-3-methylpentanoate (2-oxo-3-methylvalerate) and of (2R)-2,3-dihydroxy-3-methylbutanoate (2,3-dihydroxyisovalerate) into 2-oxo-3-methylbutanoate (2-oxoisovalerate), the penultimate precursor to L-isoleucine and L-valine, respectively. This is Dihydroxy-acid dehydratase from Salinispora arenicola (strain CNS-205).